The chain runs to 188 residues: Ribosomal RNA small subunit methyltransferase G (188 aa).

Residues glycine 69, phenylalanine 74, 119 to 120 (VQ), and arginine 134 contribute to the S-adenosyl-L-methionine site.

This sequence belongs to the methyltransferase superfamily. RNA methyltransferase RsmG family.

It localises to the cytoplasm. It catalyses the reaction guanosine(527) in 16S rRNA + S-adenosyl-L-methionine = N(7)-methylguanosine(527) in 16S rRNA + S-adenosyl-L-homocysteine. Its function is as follows. Specifically methylates the N7 position of guanine in position 527 of 16S rRNA. The sequence is that of Ribosomal RNA small subunit methyltransferase G from Campylobacter jejuni subsp. jejuni serotype O:23/36 (strain 81-176).